The chain runs to 338 residues: Fructose-1,6-bisphosphatase class 1 (338 aa).

Positions 94, 116, 118, and 119 each coordinate Mg(2+). Substrate-binding positions include 119–122 (DGSS), N210, and K276. E282 is a Mg(2+) binding site.

This sequence belongs to the FBPase class 1 family. In terms of assembly, homotetramer. Mg(2+) is required as a cofactor.

Its subcellular location is the cytoplasm. It catalyses the reaction beta-D-fructose 1,6-bisphosphate + H2O = beta-D-fructose 6-phosphate + phosphate. The protein operates within carbohydrate biosynthesis; gluconeogenesis. The polypeptide is Fructose-1,6-bisphosphatase class 1 (Burkholderia thailandensis (strain ATCC 700388 / DSM 13276 / CCUG 48851 / CIP 106301 / E264)).